The sequence spans 98 residues: Small ribosomal subunit protein bS6 (98 aa).

This sequence belongs to the bacterial ribosomal protein bS6 family.

Binds together with bS18 to 16S ribosomal RNA. The chain is Small ribosomal subunit protein bS6 from Staphylococcus epidermidis (strain ATCC 35984 / DSM 28319 / BCRC 17069 / CCUG 31568 / BM 3577 / RP62A).